A 240-amino-acid chain; its full sequence is uncharacterized protein (240 aa).

It is found in the mitochondrion. This is an uncharacterized protein from Arabidopsis thaliana (Mouse-ear cress).